We begin with the raw amino-acid sequence, 333 residues long: 4-hydroxyproline epimerase (333 aa).

The active-site Proton acceptor is the Cys-90. Residues 91 to 92 (GH) and Asp-249 contribute to the substrate site. The Proton donor role is filled by Cys-253. Residue 254–255 (GT) coordinates substrate.

Belongs to the proline racemase family. As to quaternary structure, homodimer.

It catalyses the reaction trans-4-hydroxy-L-proline = cis-4-hydroxy-D-proline. In terms of biological role, allows intracellular utilization of 4-hydroxyproline, one of the major constituents of host collagen, by converting 4-hydroxy-L-proline to 4-hydroxy-D-proline, which can be further metabolized by intracellular 4-hydroxy-D-proline oxidases. Strong B-cell mitogen. Plays an important role in the regulation of intra- and extracellular amino acid pools, allowing the bacterium to profit from host precursors and enzymatic pathways. The protein is 4-hydroxyproline epimerase of Brucella abortus (strain S19).